The sequence spans 504 residues: MAKFQGYLEFDGARQQSFLYPLFFREYIYVLAYDHGLNRLNRNRSIFLENSDYGKKYSSLIVKRLILRMYEQNRLIIPTKDLNQNPFLGHTNLVDYQMISILFAVIVEIPFSLRLGSSFEGKQLKKSYNLQSIHSIFPFLEDKLSHFNYVVDVLIPYPIHLEILVQTLRYRVKDPSSLHFFRFCLYEYCNWKNFDIKKKSILNPRFFLFLYNSHVCEYESIFFFLRKRSSHLRSTSYEVLFERILFYGKIQHFLKVFVNTFPAILGLLKDPFIHYVRYHGKCILATKDTPLLMNKWKYFFVNLWQCYFSVWFQSQKVNIKQLSKDNLEFLGYLSSLRLNPLVVRSQMLENAFLIDNVRIKLDSKIPISSIIGSLAKDKFCNVLGHPISKAAWTDSSDSDILNRFVRICRNISHYYSGSSKKKNLYRIKYILRLCCVKTLARKHKSTVRAFLKRLGSGLLEEFLTGEDQVLSLIFPRSYYASKRLYRVRIWYLDILYLNDLVNHE.

Belongs to the intron maturase 2 family. MatK subfamily.

Its subcellular location is the plastid. The protein resides in the chloroplast. Functionally, usually encoded in the trnK tRNA gene intron. Probably assists in splicing its own and other chloroplast group II introns. The polypeptide is Maturase K (Lobularia maritima (Sweet alyssum)).